The sequence spans 434 residues: MSILKIHAREIFDSRGNPTVEVDLYTNKGLFRAAVPSGASTGIYEALELRDNDKTRYMGKGVSKAVEHINKTIAPALISKNVNVVEQDKIDKLMLDMDGSENKSKFGANAILGVSLAVCKAGAAEKGVPLYRHIADLAGNPEVILPVPAFNVINGGSHAGNKLAMQEFMIPPCGADSFKEAMRIGAEVYHNLKNVIKEKYGKDATNVGDEGGFAPNILENKEALELLKTAIGKAGYSDKVVIGMDVAASEFYRDGKYDLDFKSPDDPSRYISPDQLADLYKGFVKNYPVVSIEDPFDQDDWGAWKKFTGSVGIQVVGDDLTVTNPKRIAKAVEEKACNCLLLKVNQIGSVTESLQACKLAQSNGWGVMVSHRSGETEDTFIADLVVGLCTGQIKTGAPCRSERLAKYNQLLRIEEELGSKARFAGRNFRNPRIN.

Residue Ser-40 coordinates Mg(2+). Substrate is bound by residues His-158 and Glu-167. Glu-210 acts as the Proton donor in catalysis. Residues Asp-245, Glu-293, and Asp-318 each coordinate Mg(2+). Glu-293 and Asp-318 together coordinate substrate. Catalysis depends on Lys-343, which acts as the Proton acceptor. Substrate contacts are provided by residues 370 to 373 (SHRS) and Lys-394.

The protein belongs to the enolase family. As to quaternary structure, homodimer. Mg(2+) is required as a cofactor.

The protein localises to the cytoplasm. The enzyme catalyses (2R)-2-phosphoglycerate = phosphoenolpyruvate + H2O. It participates in carbohydrate degradation; glycolysis; pyruvate from D-glyceraldehyde 3-phosphate: step 4/5. Both an enzyme and a lens structural protein. The sequence is that of Alpha-enolase (ENO1) from Anas platyrhynchos (Mallard).